The sequence spans 165 residues: Calcium-binding protein H (165 aa).

EF-hand domains follow at residues 7–42 (QIEK…MGSK), 43–78 (YPEK…RYQD), 88–123 (YFQD…IGSD), and 124–159 (HPKE…TIRS). Ca(2+) is bound by residues Asp20, Asp22, Asn24, Glu26, Glu31, Asp56, Asp58, Glu60, Lys62, Glu67, Asp101, Asn103, Asp105, Arg107, Glu112, Asp137, Asn139, Asp141, Tyr143, and Glu148.

This is Calcium-binding protein H (cbpH) from Dictyostelium discoideum (Social amoeba).